The chain runs to 478 residues: UDP-N-acetylmuramate--L-alanine ligase (478 aa).

Position 112–118 (112–118 (GTHGKTT)) interacts with ATP.

Belongs to the MurCDEF family.

The protein resides in the cytoplasm. The enzyme catalyses UDP-N-acetyl-alpha-D-muramate + L-alanine + ATP = UDP-N-acetyl-alpha-D-muramoyl-L-alanine + ADP + phosphate + H(+). The protein operates within cell wall biogenesis; peptidoglycan biosynthesis. Its function is as follows. Cell wall formation. This chain is UDP-N-acetylmuramate--L-alanine ligase, found in Polaromonas naphthalenivorans (strain CJ2).